The primary structure comprises 572 residues: Linalool synthase TPS2, chloroplastic (572 aa).

A chloroplast-targeting transit peptide spans 1 to 27; it reads EVEEPKTKISASTAEASSSRISSAKMT. The segment at 1-45 is disordered; sequence EVEEPKTKISASTAEASSSRISSAKMTADGTIKLGDQSPLKQSEK. Positions 8–28 are enriched in low complexity; it reads KISASTAEASSSRISSAKMTA. The (2E)-geranyl diphosphate site is built by Arg284, Asp321, Asp325, Arg462, and Asn465. Mg(2+) is bound by residues Asp321 and Asp325. Positions 321–325 match the DDXXD motif motif; that stretch reads DDVYD. Mg(2+) contacts are provided by Asn465, Thr469, and Ser473.

It belongs to the terpene synthase family. Tpsb subfamily. In terms of assembly, monomer. Mg(2+) is required as a cofactor. The cofactor is Mn(2+). Expressed in flowers and fruits.

It localises to the plastid. It is found in the chloroplast. The enzyme catalyses (2E)-geranyl diphosphate = beta-myrcene + diphosphate. The catalysed reaction is (2E)-geranyl diphosphate + H2O = linalool + diphosphate. It carries out the reaction (2E)-geranyl diphosphate = (Z)-beta-ocimene + diphosphate. It catalyses the reaction (2E)-geranyl diphosphate = (E)-beta-ocimene + diphosphate. The protein operates within secondary metabolite biosynthesis; terpenoid biosynthesis. Functionally, monoterpene synthase (mono-TPS) involved in the biosynthesis of monoterpenes natural products, constituent of coffee beverage aroma. Catalyzes the conversion of (2E)-geranyl diphosphate (GPP) into linalool and beta-myrcene, and, as minor products, cis-ocimene and trans-ocimene. Not able to use geranylgeranyl pyrophosphate (GGPP) and farnesyl pyrophosphate (FPP) as substrates. This chain is Linalool synthase TPS2, chloroplastic, found in Coffea arabica (Arabian coffee).